Here is a 102-residue protein sequence, read N- to C-terminus: Small ribosomal subunit protein uS10 (102 aa).

This sequence belongs to the universal ribosomal protein uS10 family. Part of the 30S ribosomal subunit.

Functionally, involved in the binding of tRNA to the ribosomes. In Bartonella henselae (strain ATCC 49882 / DSM 28221 / CCUG 30454 / Houston 1) (Rochalimaea henselae), this protein is Small ribosomal subunit protein uS10.